Reading from the N-terminus, the 7603-residue chain is Cysteine repeat modular protein B (7603 aa).

Asn-172 carries N-linked (GlcNAc...) asparagine glycosylation. A helical transmembrane segment spans residues 223–243 (LVGFFLVPVFVVFFVLSSDAT). Disordered stretches follow at residues 248 to 275 (GVGV…SSPG) and 291 to 323 (RDTK…GKGF). Positions 263–275 (SVSSSSRASSSPG) are enriched in low complexity. Residues 302-313 (SSRRSARARRRR) are compositionally biased toward basic residues. Asn-329, Asn-589, Asn-848, Asn-1128, Asn-1183, and Asn-1402 each carry an N-linked (GlcNAc...) asparagine glycan. The disordered stretch occupies residues 1554–1574 (VLRSRSGPSHPSSVSQPSPSF). Positions 1557 to 1573 (SRSGPSHPSSVSQPSPS) are enriched in low complexity. Residues Asn-1622, Asn-2578, Asn-2664, Asn-3094, and Asn-3126 are each glycosylated (N-linked (GlcNAc...) asparagine). Residues 3316–3445 (SNAVPEADEN…SDLTTSQPED (130 aa)) are disordered. A compositionally biased stretch (acidic residues) spans 3321 to 3340 (EADENQVESAEPEQNAEGET). Positions 3342–3360 (EQGAEEAGGNAAEPGAESG) are enriched in low complexity. N-linked (GlcNAc...) asparagine glycosylation is found at Asn-3546, Asn-4367, Asn-4823, Asn-4901, Asn-5186, Asn-5546, and Asn-5666. Residues 5758–5799 (LAESRSDDGTVGDDVDLDDNALSGTTNSGWTTSSSNSERVRK) are disordered. The span at 5767 to 5776 (TVGDDVDLDD) shows a compositional bias: acidic residues. Residues 5780–5794 (SGTTNSGWTTSSSNS) show a composition bias toward low complexity. N-linked (GlcNAc...) asparagine glycosylation is found at Asn-5806, Asn-5876, Asn-5998, Asn-6055, and Asn-6369. The tract at residues 6043–6115 (GEADHTPADG…EASEAESVSA (73 aa)) is disordered. The span at 6051-6060 (DGSSNSSEDS) shows a compositional bias: polar residues. Residues 6391 to 6405 (EFTDTGPAPDDHTDE) are compositionally biased toward basic and acidic residues. The tract at residues 6391-6436 (EFTDTGPAPDDHTDEGGANLDSTGGSGEPSSSAPVDPSGENEGQLL) is disordered. The span at 6410–6423 (LDSTGGSGEPSSSA) shows a compositional bias: polar residues. Asn-6453 carries an N-linked (GlcNAc...) asparagine glycan. 8 helical membrane-spanning segments follow: residues 6520–6540 (IFIL…ALTI), 6552–6572 (VLIR…LMPA), 6578–6598 (LAGW…ALHP), 6627–6647 (IFVP…CVAT), 6770–6790 (LILG…GFVA), 6831–6851 (CVAL…QEIF), 6888–6908 (GLMV…FEVF), and 6912–6932 (GAIP…SLFV). Asn-7013 carries an N-linked (GlcNAc...) asparagine glycan. The helical transmembrane segment at 7017–7037 (FVAALSDSLSQLVIAWCQFTI) threads the bilayer. The N-linked (GlcNAc...) asparagine glycan is linked to Asn-7061. A coiled-coil region spans residues 7174–7242 (APQLRKENHA…RGLIESEIDD (69 aa)). A disordered region spans residues 7379-7603 (AAPAAGLRSH…LKKPGSPKQE (225 aa)). The span at 7408–7417 (LGTNLSTPSA) shows a compositional bias: polar residues. Residue Asn-7411 is glycosylated (N-linked (GlcNAc...) asparagine). 3 stretches are compositionally biased toward low complexity: residues 7474–7496 (PTPS…SVTP), 7509–7541 (SEAP…SSDL), and 7560–7582 (GEAA…AAQP).

As to quaternary structure, component of a complex, at least composed of cysteine repeat modular protein A (CRMPa), cysteine repeat modular protein B (CRMPb), micronemal protein 15 (MIC15) and thrombospondin type 1 domain-containing protein (TSP1).

Its subcellular location is the cell membrane. It is found in the endoplasmic reticulum. The protein resides in the golgi apparatus. Functionally, required for triggering rhoptry secretion. Plays a role in host cell invasion. This is Cysteine repeat modular protein B from Toxoplasma gondii.